A 372-amino-acid polypeptide reads, in one-letter code: Protein phosphatase Mn(2+)-dependent 1K (372 aa).

The transit peptide at 1-29 (MSTAALITLVRSGGNQVRRRVLLSSRLLQ) directs the protein to the mitochondrion. The tract at residues 34–55 (VTPTCHSSTSEPRCSRFDPDGS) is disordered. The interval 46-61 (RCSRFDPDGSGSPATW) is critical for association with the BCKDH complex. The PPM-type phosphatase domain occupies 94–346 (NVGCASQIGK…DNSTAVVVPF (253 aa)). Residues Asp127 and Gly128 each coordinate Mn(2+). Ser248 bears the Phosphoserine mark. Residues Asp298 and Asp337 each coordinate Mn(2+).

This sequence belongs to the PP2C family. As to quaternary structure, monomer. Interacts with E1 and E2 components of the branched-chain alpha-ketoacid dehydrogenase (BCKDH) complex; this interaction requires colocalization in mitochondria. Interacts with BCKDHA but not with BCKDHB of the E1 component. Interacts with the 24-meric E2 core composed of DBT monomers with a 24:1 stoichiometry; the N-terminal region (residues 49-61) of PPM1K and C-terminal linker of the lipoyl domain of DBT (residues 145-160) are critical for this interaction, whereas the lipoyl prosthetic group is dispensable. Competes with BCKDK for binding to the E2 core; this interaction is modulated by branched-chain alpha-keto acids. At steady state, BCKDH holoenzyme preferentially binds BCKDK and BCKDHA is phosphorylated. In response to high levels of branched-chain alpha-keto acids, the inhibitory BCKDK is replaced by activating PPM1K leading to BCKDHA dephosphorylation and BCAA degradation. Requires Mn(2+) as cofactor.

It is found in the mitochondrion matrix. The catalysed reaction is O-phospho-L-seryl-[3-methyl-2-oxobutanoate dehydrogenase] + H2O = L-seryl-[3-methyl-2-oxobutanoate dehydrogenase] + phosphate. The enzyme catalyses O-phospho-L-seryl-[protein] + H2O = L-seryl-[protein] + phosphate. The protein operates within protein modification. Its activity is regulated as follows. Up-regulated upon interaction with the 24-meric DBT/E2 core of the BCKDH complex. Inhibited by Mg(2+) and Ca(2+) ions likely by competing with Mn(2+) ions for binding to the same metal-binding sites. Serine/threonine-protein phosphatase component of macronutrients metabolism. Forms a functional kinase and phosphatase pair with BCKDK, serving as a metabolic regulatory node that coordinates branched-chain amino acids (BCAAs) with glucose and lipid metabolism via two distinct phosphoprotein targets: mitochondrial BCKDHA subunit of the branched-chain alpha-ketoacid dehydrogenase (BCKDH) complex and cytosolic ACLY, a lipogenic enzyme of Krebs cycle. At high levels of branched-chain ketoacids, dephosphorylates and activates mitochondrial BCKDH complex, a multisubunit complex consisting of three multimeric components each involved in different steps of BCAA catabolism: E1 composed of BCKDHA and BCKDHB, E2 core composed of DBT monomers, and E3 composed of DLD monomers. Tightly associates with the E2 component of BCKDH complex and dephosphorylates BCKDHA on Ser-337. Regulates the reversible phosphorylation of ACLY in response to changes in cellular carbohydrate abundance such as occurs during fasting to feeding metabolic transition. At fasting state, appears to dephosphorylate ACLY on Ser-455 and inactivate it. Refeeding stimulates MLXIPL/ChREBP transcription factor, leading to increased BCKDK to PPM1K expression ratio, phosphorylation and activation of ACLY that ultimately results in the generation of malonyl-CoA and oxaloacetate immediate substrates of de novo lipogenesis and gluconeogenesis, respectively. Recognizes phosphosites having SxS or RxxS motifs and strictly depends on Mn(2+) ions for the phosphatase activity. Regulates Ca(2+)-induced opening of mitochondrial transition pore and apoptotic cell death. The polypeptide is Protein phosphatase Mn(2+)-dependent 1K (Homo sapiens (Human)).